Reading from the N-terminus, the 381-residue chain is Cobalt-precorrin-5B C(1)-methyltransferase (381 aa).

Belongs to the CbiD family.

It catalyses the reaction Co-precorrin-5B + S-adenosyl-L-methionine = Co-precorrin-6A + S-adenosyl-L-homocysteine. The protein operates within cofactor biosynthesis; adenosylcobalamin biosynthesis; cob(II)yrinate a,c-diamide from sirohydrochlorin (anaerobic route): step 6/10. Its function is as follows. Catalyzes the methylation of C-1 in cobalt-precorrin-5B to form cobalt-precorrin-6A. The sequence is that of Cobalt-precorrin-5B C(1)-methyltransferase from Prochlorococcus marinus (strain SARG / CCMP1375 / SS120).